The chain runs to 194 residues: Anthranilate synthase component 2 (194 aa).

One can recognise a Glutamine amidotransferase type-1 domain in the interval 2 to 194 (KIFFIDNFDS…QSVGFLEGLL (193 aa)). 57 to 59 (GPG) contributes to the L-glutamine binding site. Cys-84 (nucleophile; for GATase activity) is an active-site residue. L-glutamine is bound by residues Gln-88 and 134–135 (SL). Residues His-170 and Glu-172 each act as for GATase activity in the active site.

In terms of assembly, heterotetramer consisting of two non-identical subunits: a beta subunit (TrpG) and a large alpha subunit (TrpE).

The catalysed reaction is chorismate + L-glutamine = anthranilate + pyruvate + L-glutamate + H(+). The protein operates within amino-acid biosynthesis; L-tryptophan biosynthesis; L-tryptophan from chorismate: step 1/5. In terms of biological role, part of a heterotetrameric complex that catalyzes the two-step biosynthesis of anthranilate, an intermediate in the biosynthesis of L-tryptophan. In the first step, the glutamine-binding beta subunit (TrpG) of anthranilate synthase (AS) provides the glutamine amidotransferase activity which generates ammonia as a substrate that, along with chorismate, is used in the second step, catalyzed by the large alpha subunit of AS (TrpE) to produce anthranilate. In the absence of TrpG, TrpE can synthesize anthranilate directly from chorismate and high concentrations of ammonia. This Helicobacter pylori (strain ATCC 700392 / 26695) (Campylobacter pylori) protein is Anthranilate synthase component 2 (trpG).